The sequence spans 199 residues: Recombination protein RecR (199 aa).

Residues 58-73 (CKICFNITDKEVCDIC) form a C4-type zinc finger. Positions 81-176 (STICVVSHPM…KVTRIAHGIP (96 aa)) constitute a Toprim domain.

The protein belongs to the RecR family.

Functionally, may play a role in DNA repair. It seems to be involved in an RecBC-independent recombinational process of DNA repair. It may act with RecF and RecO. The sequence is that of Recombination protein RecR from Caldanaerobacter subterraneus subsp. tengcongensis (strain DSM 15242 / JCM 11007 / NBRC 100824 / MB4) (Thermoanaerobacter tengcongensis).